The following is a 379-amino-acid chain: 3-isopropylmalate dehydrogenase 1 (379 aa).

The substrate site is built by arginine 101, arginine 111, arginine 139, and aspartate 230. Positions 230, 254, and 258 each coordinate Mg(2+). 293 to 305 (GSAPDIAGKGIAN) contributes to the NAD(+) binding site.

The protein belongs to the isocitrate and isopropylmalate dehydrogenases family. LeuB type 1 subfamily. As to quaternary structure, homodimer. It depends on Mg(2+) as a cofactor. The cofactor is Mn(2+).

Its subcellular location is the cytoplasm. It carries out the reaction (2R,3S)-3-isopropylmalate + NAD(+) = 4-methyl-2-oxopentanoate + CO2 + NADH. It functions in the pathway amino-acid biosynthesis; L-leucine biosynthesis; L-leucine from 3-methyl-2-oxobutanoate: step 3/4. Functionally, catalyzes the oxidation of 3-carboxy-2-hydroxy-4-methylpentanoate (3-isopropylmalate) to 3-carboxy-4-methyl-2-oxopentanoate. The product decarboxylates to 4-methyl-2 oxopentanoate. The sequence is that of 3-isopropylmalate dehydrogenase 1 from Bradyrhizobium diazoefficiens (strain JCM 10833 / BCRC 13528 / IAM 13628 / NBRC 14792 / USDA 110).